A 222-amino-acid polypeptide reads, in one-letter code: Sugar fermentation stimulation protein homolog (222 aa).

Belongs to the SfsA family.

This chain is Sugar fermentation stimulation protein homolog, found in Thermotoga neapolitana (strain ATCC 49049 / DSM 4359 / NBRC 107923 / NS-E).